A 484-amino-acid polypeptide reads, in one-letter code: Argininosuccinate lyase (484 aa).

Belongs to the lyase 1 family. Argininosuccinate lyase subfamily.

The protein resides in the cytoplasm. The catalysed reaction is 2-(N(omega)-L-arginino)succinate = fumarate + L-arginine. It participates in amino-acid biosynthesis; L-arginine biosynthesis; L-arginine from L-ornithine and carbamoyl phosphate: step 3/3. The sequence is that of Argininosuccinate lyase from Methanocaldococcus jannaschii (strain ATCC 43067 / DSM 2661 / JAL-1 / JCM 10045 / NBRC 100440) (Methanococcus jannaschii).